The chain runs to 412 residues: L-cysteine:1D-myo-inositol 2-amino-2-deoxy-alpha-D-glucopyranoside ligase (412 aa).

Cys43 lines the Zn(2+) pocket. L-cysteinyl-5'-AMP is bound by residues 43–46 (CGIT), Thr58, and 81–83 (NVT). The 'HIGH' region signature appears at 45 to 55 (ITPYDATHLGH). Positions 186 to 191 (ERGGDP) match the 'ERGGDP' region motif. Trp227 is a binding site for L-cysteinyl-5'-AMP. Cys231 provides a ligand contact to Zn(2+). L-cysteinyl-5'-AMP is bound at residue 249–251 (GND). A Zn(2+)-binding site is contributed by His256. Ile283 serves as a coordination point for L-cysteinyl-5'-AMP. Positions 289 to 293 (KMSKS) match the 'KMSKS' region motif.

This sequence belongs to the class-I aminoacyl-tRNA synthetase family. MshC subfamily. In terms of assembly, monomer. Requires Zn(2+) as cofactor.

It carries out the reaction 1D-myo-inositol 2-amino-2-deoxy-alpha-D-glucopyranoside + L-cysteine + ATP = 1D-myo-inositol 2-(L-cysteinylamino)-2-deoxy-alpha-D-glucopyranoside + AMP + diphosphate + H(+). Functionally, catalyzes the ATP-dependent condensation of GlcN-Ins and L-cysteine to form L-Cys-GlcN-Ins. The protein is L-cysteine:1D-myo-inositol 2-amino-2-deoxy-alpha-D-glucopyranoside ligase of Salinispora arenicola (strain CNS-205).